Consider the following 445-residue polypeptide: MDEEYDVIVLGTGLKECILSGLLSVDGLKVLHMDRNDYYGGESSSLNLTQLWKRFRGSDTPEENLGASREYNVDMIPKFIMANGLLVQTLIHTDVTKYLNFKAVDGSFVYKKGKIYKVPATDVEALKSPLMGLFEKRRARKFFIYVQDYDEKDPKSHEGLDLSKVTAREIISKYGLEDDTIDFIGHALALHNDDDYLDQPAIDFVKRIKLYAESLARFQGGSPYIYPLYGLGELPQAFARLSAVYGGTYMLNKPECKVEFDGSGKAIGVTSAGETAKCKKVVCDPSYLSEKVKKVGKVTRAVCIMSHPIPDTNDAHSVQIILPQKQLGRKSDMYLFCCSYAHNVAPKGKYIAFVSAEAETDNPEEELKPGIELLGPTDEIFYHSYDTYVPTNIQEEDNCFISATYDATTHFESTVVDVLDMYTKITGKTLDLSVDLSAASAAAEN.

It belongs to the Rab GDI family.

In terms of biological role, regulates the GDP/GTP exchange reaction of most RAB proteins by inhibiting the dissociation of GDP from them, and the subsequent binding of GTP. The polypeptide is Guanosine nucleotide diphosphate dissociation inhibitor At5g09550 (Arabidopsis thaliana (Mouse-ear cress)).